The chain runs to 206 residues: VEL1-related protein YOR387C (206 aa).

An N-terminal signal peptide occupies residues Met-1–Ala-19. 6 N-linked (GlcNAc...) asparagine glycosylation sites follow: Asn-26, Asn-48, Asn-91, Asn-139, Asn-152, and Asn-183.

This sequence belongs to the VEL1 family. In terms of processing, N-glycosylated.

It localises to the cytoplasm. It is found in the cytosol. This Saccharomyces cerevisiae (strain ATCC 204508 / S288c) (Baker's yeast) protein is VEL1-related protein YOR387C.